The sequence spans 766 residues: Exocyst complex component 6 (766 aa).

A coiled-coil region spans residues 28–90 (NTKQIGDQLE…SLDTSLRQIS (63 aa)).

It belongs to the SEC15 family. The exocyst complex is composed of Sec3/Exoc1, Sec5/Exoc2, Sec6/Exoc3, Sec8/Exoc4, Sec10/Exoc5, Sec15/Exoc6, Exo70/Exoc7 and Exo84/Exoc8. Interacts with RAB3, RAB8, RAB11 and RAB27. In terms of tissue distribution, detected in developing rhabdomeres in photoreceptor cells.

Its subcellular location is the cell projection. It is found in the rhabdomere. In terms of biological role, component of the exocyst complex involved in the docking of exocytic vesicles with fusion sites on the plasma membrane. The chain is Exocyst complex component 6 from Drosophila melanogaster (Fruit fly).